The following is a 153-amino-acid chain: Small ribosomal subunit protein uS19A (153 aa).

This sequence belongs to the universal ribosomal protein uS19 family. As to quaternary structure, component of the small ribosomal subunit (SSU). Mature yeast ribosomes consist of a small (40S) and a large (60S) subunit. The 40S small subunit contains 1 molecule of ribosomal RNA (18S rRNA) and at least 33 different proteins. The large 60S subunit contains 3 rRNA molecules (25S, 5.8S and 5S rRNA) and at least 46 different proteins.

It localises to the cytoplasm. The protein localises to the nucleus. Its subcellular location is the nucleolus. Functionally, component of the ribosome, a large ribonucleoprotein complex responsible for the synthesis of proteins in the cell. The small ribosomal subunit (SSU) binds messenger RNAs (mRNAs) and translates the encoded message by selecting cognate aminoacyl-transfer RNA (tRNA) molecules. The large subunit (LSU) contains the ribosomal catalytic site termed the peptidyl transferase center (PTC), which catalyzes the formation of peptide bonds, thereby polymerizing the amino acids delivered by tRNAs into a polypeptide chain. The nascent polypeptides leave the ribosome through a tunnel in the LSU and interact with protein factors that function in enzymatic processing, targeting, and the membrane insertion of nascent chains at the exit of the ribosomal tunnel. uS19 is involved in the nuclear export of the small ribosomal subunit precursor. Has a role in the late stage of the assembly of pre-40S particles within the nucleus and controls their export to the cytoplasm. The protein is Small ribosomal subunit protein uS19A (rps1501) of Schizosaccharomyces pombe (strain 972 / ATCC 24843) (Fission yeast).